Consider the following 1779-residue polypeptide: 6-methylsalicylic acid synthase (1779 aa).

Residues Met-1–Ser-11 are compositionally biased toward polar residues. The tract at residues Met-1 to Gly-40 is disordered. The span at Glu-31–Gly-40 shows a compositional bias: basic and acidic residues. Residues Leu-43–Ala-472 enclose the Ketosynthase family 3 (KS3) domain. Residues Cys-215, His-350, and His-392 each act as for beta-ketoacyl synthase activity in the active site. The segment at Trp-586 to Ala-883 is malonyl-CoA:ACP transacylase (MAT) domain. The active-site For acyl/malonyl transferase activity is Ser-672. Residues Thr-942 to Phe-1218 are product template (PT) domain. Residues Asn-948–Pro-1064 are N-terminal hotdog fold. Residues Asn-948–Ser-1219 enclose the PKS/mFAS DH domain. Catalysis depends on His-980, which acts as the Proton acceptor; for dehydratase activity. Residues Pro-1079–Ser-1219 are C-terminal hotdog fold. Asp-1138 serves as the catalytic Proton donor; for dehydratase activity. The Carrier domain maps to Gln-1703–Leu-1777. Position 1737 is an O-(pantetheine 4'-phosphoryl)serine (Ser-1737).

The enzyme catalyses 3 malonyl-CoA + acetyl-CoA + NADPH + 3 H(+) = 6-methylsalicylate + 3 CO2 + NADP(+) + 4 CoA + H2O. It participates in secondary metabolite biosynthesis; terpenoid biosynthesis. Its function is as follows. Non-reducing polyketide synthase; part of the gene cluster that mediates the biosynthesis of yanuthone D, a fungal isoprenoid epoxycyclohexenone that acts as an antibiotic against fungi and bacteria. The first step of the pathway is the synthesis of 6-methylsalicylic acid (6-MSA) by the polyketide synthase yanA. 6-MSA is then converted to m-cresol by the decarboxylase yanB. The cytochrome P450 monooxygenase yanC then catalyzes the oxidation of m-cresol to toluquinol. Epoxidation of toluquinol is then performed by the short chain dehydrogenase yanD, with the help of yanE, and a further prenylation by yanG leads to 7-deacetoxyyanuthone A. The next step is the hydroxylation of C-22 of 7-deacetoxyyanuthone A by the cytochrome P450 monooxygenase yanH to yield 22-deacetylyanuthone A. O-Mevalon transferase yanI then attaches mevalon to the hydroxyl group of 22-deacetylyanuthone A to produce yanuthone E. Finally, the FAD-dependent monooxygenase yanF oxidizes the hydroxyl group at C15 of yanuthone E to form yanuthone D. Furthermore, several branching points in the pathway lead to the production of yanuthones F and G from 7-deacetoxyyanuthone A; yanuthones H and I from 22-deacetylyanuthone A; and yanuthone J from yanuthone E. This Aspergillus niger (strain ATCC 1015 / CBS 113.46 / FGSC A1144 / LSHB Ac4 / NCTC 3858a / NRRL 328 / USDA 3528.7) protein is 6-methylsalicylic acid synthase.